Consider the following 539-residue polypeptide: Keratin, type II cytoskeletal 73 (539 aa).

Residues 1 to 130 (MNRQFTCKPG…DPEIQKVRAQ (130 aa)) form a head region. The interval 131–166 (EREQIKALNNKFASFIDKVRFLEQQNQVLQTKWELL) is coil 1A. Residues 131-444 (EREQIKALNN…KLLEGEECRM (314 aa)) form the IF rod domain. Residues 167–185 (QQLDLSNCRRNLEPVYEAH) form a linker 1 region. The interval 186-277 (ISSLQKQLDS…CLYEGEITQM (92 aa)) is coil 1B. The tract at residues 278–301 (QSHISDTSVVLSMDNNRNLDLDSI) is linker 12. The interval 302–440 (IAEVRAQYED…ATYRKLLEGE (139 aa)) is coil 2. Positions 441–539 (ECRMSGEHTS…LGSPSKKTMR (99 aa)) are tail.

This sequence belongs to the intermediate filament family. In terms of assembly, heterotetramer of two type I and two type II keratins.

In terms of biological role, has a role in hair formation. Specific component of keratin intermediate filaments in the inner root sheath (IRS) of the hair follicle. This is Keratin, type II cytoskeletal 73 (Krt73) from Mus musculus (Mouse).